A 285-amino-acid polypeptide reads, in one-letter code: HTH-type transcriptional regulator MurR (285 aa).

The region spanning 1–77 (MLYLTKISNA…MALIGEYSAS (77 aa)) is the HTH rpiR-type domain. Residues 37 to 56 (SRQMAKQLGISQSSIVKFAQ) constitute a DNA-binding region (H-T-H motif). An SIS domain is found at 128–279 (IIEVISKAPF…SLKMIQRSSE (152 aa)).

In terms of assembly, homotetramer.

It participates in amino-sugar metabolism; N-acetylmuramate degradation [regulation]. Its function is as follows. Represses the expression of the murPQ operon involved in the uptake and degradation of N-acetylmuramic acid (MurNAc). Binds to two adjacent inverted repeats within the operator region. MurNAc 6-phosphate, the substrate of MurQ, is the specific inducer that weakens binding of MurR to the operator. The polypeptide is HTH-type transcriptional regulator MurR (Shigella boydii serotype 4 (strain Sb227)).